The chain runs to 428 residues: Protein CLP1 homolog (428 aa).

ATP-binding positions include Glu22, Lys63, and 127–132; that span reads DVGKST.

This sequence belongs to the Clp1 family. Clp1 subfamily.

It localises to the nucleus. Required for endonucleolytic cleavage during polyadenylation-dependent pre-mRNA 3'-end formation. In Nematostella vectensis (Starlet sea anemone), this protein is Protein CLP1 homolog.